Here is a 387-residue protein sequence, read N- to C-terminus: Sulfate adenylyltransferase (387 aa).

The protein belongs to the sulfate adenylyltransferase family.

It carries out the reaction sulfate + ATP + H(+) = adenosine 5'-phosphosulfate + diphosphate. Its pathway is sulfur metabolism; hydrogen sulfide biosynthesis; sulfite from sulfate: step 1/3. The protein is Sulfate adenylyltransferase (sat) of Deinococcus radiodurans (strain ATCC 13939 / DSM 20539 / JCM 16871 / CCUG 27074 / LMG 4051 / NBRC 15346 / NCIMB 9279 / VKM B-1422 / R1).